Reading from the N-terminus, the 393-residue chain is Matrix metalloproteinase-23 (393 aa).

Topologically, residues 1-20 (MGRGACVPSAASGAGDRARQ) are cytoplasmic. Residues 1–81 (MGRGACVPSA…PHPPVPRRRR (81 aa)) constitute a propeptide that is removed on maturation. A helical; Signal-anchor for type II membrane protein transmembrane segment spans residues 21–41 (LGAVLGALCLFPALVLLAWPG). Topologically, residues 42–393 (TPANGAGARV…TYSWRIRVRS (352 aa)) are lumenal. The disordered stretch occupies residues 60–79 (TSGVLASGSLGPPHPPVPRR). Asn95 and Asn151 each carry an N-linked (GlcNAc...) asparagine glycan. His214 contributes to the Zn(2+) binding site. The active site involves Glu215. His218 and His224 together coordinate Zn(2+). Asn235 carries N-linked (GlcNAc...) asparagine glycosylation. The 35-residue stretch at 258–292 (CLDRLFVCASWARRGFCDTRRRLMKRLCPSSCDFC) folds into the ShKT domain. Cystine bridges form between Cys258-Cys292, Cys265-Cys285, and Cys274-Cys289. The region spanning 298–383 (PTVAATPPPP…VVRRRQRVLS (86 aa)) is the Ig-like C2-type domain. Residue Asn319 is glycosylated (N-linked (GlcNAc...) asparagine). A disulfide bridge connects residues Cys324 and Cys373.

Belongs to the peptidase M10A family. It depends on Zn(2+) as a cofactor. In terms of processing, N-glycosylated. Proteolytic cleavage might yield an active form.

The protein resides in the membrane. The protein localises to the endoplasmic reticulum membrane. Its function is as follows. Protease. May regulate the surface expression of some potassium channels by retaining them in the endoplasmic reticulum. The chain is Matrix metalloproteinase-23 (MMP23) from Bos taurus (Bovine).